Here is a 93-residue protein sequence, read N- to C-terminus: Neutrophil cationic peptide 1 type B (93 aa).

A signal peptide spans 1 to 19 (MRTVPLFAACLLLTLMAQA). A propeptide spanning residues 20–62 (EPLPRAADHSDTKMKGDREDHVAVISFWEEESTSLQDAGAGAG) is cleaved from the precursor. Intrachain disulfides connect cysteine 65-cysteine 93, cysteine 67-cysteine 82, and cysteine 72-cysteine 92.

The protein belongs to the alpha-defensin family. As to expression, bone marrow.

The protein resides in the secreted. Has antibiotic, anti-fungi and antiviral activity. In Cavia porcellus (Guinea pig), this protein is Neutrophil cationic peptide 1 type B.